The chain runs to 312 residues: Non-structural protein 12A (312 aa).

Residues 1–23 (MFKSGSGSLKRSGSISSVKSFSG) show a composition bias toward low complexity. 3 disordered regions span residues 1–37 (MFKS…RGSV), 63–97 (VPEK…YNQN), and 114–162 (KGRG…TGDG). Basic and acidic residues predominate over residues 63–73 (VPEKTKSEGNL). Positions 74-97 (KNKSSVITGNFESSGPTNAHYNQN) are enriched in polar residues. The segment covering 122-134 (DARHTATDSRLSQ) has biased composition (basic and acidic residues).

It belongs to the phytoreovirus non-structural protein Pns12A family.

The protein resides in the host cytoplasm. Its function is as follows. Constituent of viral factories. The chain is Non-structural protein 12A from Rice dwarf virus (isolate Fujian) (RDV).